The chain runs to 210 residues: Pre-mRNA-splicing factor 38 (210 aa).

Positions 181-210 are disordered; it reads PLSSSSDEEDDDEEQISKLESNEGAVDRNI. The segment covering 195 to 210 has biased composition (basic and acidic residues); it reads QISKLESNEGAVDRNI.

Belongs to the PRP38 family. As to quaternary structure, component of the 25S U4/U6.U5 tri-snRNP particle, a subcomplex of the spliceosome.

The protein localises to the nucleus. Functionally, required for pre-mRNA splicing and maintenance of stable U6 small nuclear RNA levels. Implicated in the formation of stable and biologically active snRNP structures. As part of the U4/U6.U5 tri-snRNP particle, dispensible for spliceosome assembly, but required for conformational changes, which result in U4 snRNA release and the subsequent catalytic activation of the spliceosome. This is Pre-mRNA-splicing factor 38 from Schizosaccharomyces pombe (strain 972 / ATCC 24843) (Fission yeast).